The sequence spans 552 residues: Scaffold protein (552 aa).

It belongs to the poxviridae protein D13 family. In terms of assembly, homotrimer. Self-assembles to form a layer. Interacts with A17 (via N-terminus); this interaction is necessary for D13 association with membranes.

The protein localises to the membrane. Functionally, scaffold protein which forms a transitory spherical honeycomb lattice providing curvature and rigidity to the convex membrane of crescent and immature virions (IV). This association occurs concomitantly with viral membrane formation. Targeted by the drug rifampicin, which prevents the formation of this lattice, and hence virus morphogenesis. In the presence of rifampicin, irregularly shaped membranes that lack the honeycomb layer accumulate around areas of electron-dense viroplasm. This layer is lost from virions during maturation from IV to mature virion (MV), through the proteolysis of A17 N-terminus. The polypeptide is Scaffold protein (Vertebrata (FPV)).